A 62-amino-acid polypeptide reads, in one-letter code: Large ribosomal subunit protein uL30 (62 aa).

This sequence belongs to the universal ribosomal protein uL30 family. In terms of assembly, part of the 50S ribosomal subunit.

The protein is Large ribosomal subunit protein uL30 of Shewanella frigidimarina (strain NCIMB 400).